Reading from the N-terminus, the 139-residue chain is ATP synthase epsilon chain (139 aa).

It belongs to the ATPase epsilon chain family. In terms of assembly, F-type ATPases have 2 components, CF(1) - the catalytic core - and CF(0) - the membrane proton channel. CF(1) has five subunits: alpha(3), beta(3), gamma(1), delta(1), epsilon(1). CF(0) has three main subunits: a, b and c.

It is found in the cell membrane. In terms of biological role, produces ATP from ADP in the presence of a proton gradient across the membrane. In Levilactobacillus brevis (strain ATCC 367 / BCRC 12310 / CIP 105137 / JCM 1170 / LMG 11437 / NCIMB 947 / NCTC 947) (Lactobacillus brevis), this protein is ATP synthase epsilon chain.